The chain runs to 140 residues: Sex-regulated protein janus-B (140 aa).

Residue Arg42 coordinates substrate. The active-site Proton acceptor is the His69. 110–112 (SRT) is a substrate binding site.

It belongs to the janus family.

Functionally, janA and janB regulate somatic sex differentiation. The sequence is that of Sex-regulated protein janus-B (janB) from Drosophila simulans (Fruit fly).